A 404-amino-acid polypeptide reads, in one-letter code: Probable tRNA sulfurtransferase (404 aa).

In terms of domain architecture, THUMP spans 60–165 (HEVAESLKEI…DEAAYISYEN (106 aa)). Residues 183 to 184 (ML), 208 to 209 (HF), arginine 265, glycine 287, and glutamine 296 contribute to the ATP site.

It belongs to the ThiI family.

It is found in the cytoplasm. It catalyses the reaction [ThiI sulfur-carrier protein]-S-sulfanyl-L-cysteine + a uridine in tRNA + 2 reduced [2Fe-2S]-[ferredoxin] + ATP + H(+) = [ThiI sulfur-carrier protein]-L-cysteine + a 4-thiouridine in tRNA + 2 oxidized [2Fe-2S]-[ferredoxin] + AMP + diphosphate. The catalysed reaction is [ThiS sulfur-carrier protein]-C-terminal Gly-Gly-AMP + S-sulfanyl-L-cysteinyl-[cysteine desulfurase] + AH2 = [ThiS sulfur-carrier protein]-C-terminal-Gly-aminoethanethioate + L-cysteinyl-[cysteine desulfurase] + A + AMP + 2 H(+). The protein operates within cofactor biosynthesis; thiamine diphosphate biosynthesis. Functionally, catalyzes the ATP-dependent transfer of a sulfur to tRNA to produce 4-thiouridine in position 8 of tRNAs, which functions as a near-UV photosensor. Also catalyzes the transfer of sulfur to the sulfur carrier protein ThiS, forming ThiS-thiocarboxylate. This is a step in the synthesis of thiazole, in the thiamine biosynthesis pathway. The sulfur is donated as persulfide by IscS. The polypeptide is Probable tRNA sulfurtransferase (Streptococcus agalactiae serotype III (strain NEM316)).